Consider the following 194-residue polypeptide: Fatty acid metabolism regulator protein (194 aa).

Residues 5 to 65 enclose the HTH tetR-type domain; sequence RPKYMQIIDA…SLFKEKMGQF (61 aa). Residues 28–47 constitute a DNA-binding region (H-T-H motif); that stretch reads QVSKIAKQAGVADGTIYLYF.

Homodimer. Binds to DNA.

The protein resides in the cytoplasm. Functionally, transcriptional regulator in fatty acid degradation. Represses transcription of genes required for fatty acid transport and beta-oxidation, including acdA, fadA, fadB, fadE, fadF, fadG, fadH, fadM, fadN, lcfA and lcfB. Binding of FadR to DNA is specifically inhibited by long chain fatty acyl-CoA compounds of 14-20 carbon atoms in length. In Bacillus subtilis (strain 168), this protein is Fatty acid metabolism regulator protein (fadR).